The chain runs to 283 residues: Pantothenate synthetase (283 aa).

Residue 30 to 37 (MGNLHLGH) coordinates ATP. The Proton donor role is filled by His37. Gln61 lines the (R)-pantoate pocket. Residue Gln61 coordinates beta-alanine. 149 to 152 (GQKD) is an ATP binding site. Gln155 is a binding site for (R)-pantoate. ATP-binding positions include Ile178 and 186–189 (MSSR).

It belongs to the pantothenate synthetase family. Homodimer.

The protein localises to the cytoplasm. The enzyme catalyses (R)-pantoate + beta-alanine + ATP = (R)-pantothenate + AMP + diphosphate + H(+). It functions in the pathway cofactor biosynthesis; (R)-pantothenate biosynthesis; (R)-pantothenate from (R)-pantoate and beta-alanine: step 1/1. In terms of biological role, catalyzes the condensation of pantoate with beta-alanine in an ATP-dependent reaction via a pantoyl-adenylate intermediate. The sequence is that of Pantothenate synthetase from Shewanella pealeana (strain ATCC 700345 / ANG-SQ1).